A 165-amino-acid polypeptide reads, in one-letter code: V-type proton ATPase 16 kDa proteolipid subunit (165 aa).

The Lumenal portion of the chain corresponds to 1 to 10 (MSSTFSGDET). A helical membrane pass occupies residues 11 to 33 (APFFGFLGAAAALVFSCMGAAYG). The Cytoplasmic portion of the chain corresponds to 34–55 (TAKSGVGVASMGVMRPELVMKS). The helical transmembrane segment at 56 to 76 (IVPVVMAGVLGIYGLIIAVII) threads the bilayer. Residues 77–95 (STGINPKAKSYYLFDGYAH) are Lumenal-facing. A helical membrane pass occupies residues 96–117 (LSSGLACGLAGLSAGMAIGIVG). The Cytoplasmic segment spans residues 118–129 (DAGVRANAQQPK). The chain crosses the membrane as a helical span at residues 130–155 (LFVGMILILIFAEALALYGLIVGIIL). Over 156–165 (SSRAGQSRAE) the chain is Lumenal.

This sequence belongs to the V-ATPase proteolipid subunit family. As to quaternary structure, V-ATPase is a heteromultimeric enzyme composed of a peripheral catalytic V1 complex (main components: subunits A, B, C, D, E, and F) attached to an integral membrane V0 proton pore complex (main component: the proteolipid protein; which is present as a hexamer that forms the proton-conducting pore).

It localises to the vacuole membrane. Its function is as follows. Proton-conducting pore forming subunit of the membrane integral V0 complex of vacuolar ATPase. V-ATPase is responsible for acidifying a variety of intracellular compartments in eukaryotic cells. In Gossypium hirsutum (Upland cotton), this protein is V-type proton ATPase 16 kDa proteolipid subunit (CVA16-2).